The primary structure comprises 339 residues: Adenylosuccinate synthetase (339 aa).

GTP contacts are provided by residues 12–18 and 42–44; these read GDEGKGS and GHS. D13 serves as the catalytic Proton acceptor. Mg(2+)-binding residues include D13 and G42. IMP contacts are provided by residues 13–16, 40–43, T127, R141, Q179, T194, and R256; these read DEGK and NAGH. H43 functions as the Proton donor in the catalytic mechanism. 252 to 258 contacts substrate; sequence TVTGRRR. GTP-binding positions include R258, 284–286, and 324–326; these read MLD and KTG.

Belongs to the adenylosuccinate synthetase family. In terms of assembly, homodimer. Mg(2+) serves as cofactor.

It is found in the cytoplasm. The enzyme catalyses IMP + L-aspartate + GTP = N(6)-(1,2-dicarboxyethyl)-AMP + GDP + phosphate + 2 H(+). Its pathway is purine metabolism; AMP biosynthesis via de novo pathway; AMP from IMP: step 1/2. Its function is as follows. Plays an important role in the de novo pathway of purine nucleotide biosynthesis. Catalyzes the first committed step in the biosynthesis of AMP from IMP. The polypeptide is Adenylosuccinate synthetase (Thermococcus onnurineus (strain NA1)).